A 408-amino-acid chain; its full sequence is Snake venom metalloproteinase BaP1 (408 aa).

Positions 1-20 (MIEVLLVTICLAVFPYQGSS) are cleaved as a signal peptide. Residues 21-191 (IILESGNVND…KASQSNLTPE (171 aa)) constitute a propeptide that is removed on maturation. Residue glutamine 192 is modified to Pyrrolidone carboxylic acid. The 197-residue stretch at 198–394 (RYIELAVVAD…HNPQCILNKP (197 aa)) folds into the Peptidase M12B domain. 3 disulfides stabilise this stretch: cysteine 309-cysteine 389, cysteine 349-cysteine 373, and cysteine 351-cysteine 356. Residue histidine 334 participates in Zn(2+) binding. The active site involves glutamate 335. Zn(2+) contacts are provided by histidine 338 and histidine 344. Positions 395-408 (LLTVSGNELLEAGE) are excised as a propeptide.

The protein belongs to the venom metalloproteinase (M12B) family. P-I subfamily. As to quaternary structure, monomer. Zn(2+) serves as cofactor. As to expression, expressed by the venom gland.

It is found in the secreted. Its activity is regulated as follows. Inhibited by EDTA, partially inhibited by o-phenantropine, and not inhibited by PMSF, pepstatin A, and aprotinin. Functionally, zinc metalloprotease that exhibits a weak hemorrhagic activity (with a minimum hemorrhagic dose of 20 ug by intradermal and intramuscular injection into mice). The basal membrane components collagen (all chains of type IV) (COL4A4), laminin and nidogen are all degraded by this toxin. Rapidly degrades the Aalpha-chain (FGA) of fibrinogen, and later on, degrades the Bbeta-chain (FGB) of fibrinogen. Also activates the complement system, and induces rat neutrophil chemotaxis. Induces edema in mouse food pad and shows a mild myotoxicity. This is Snake venom metalloproteinase BaP1 from Bothrops asper (Terciopelo).